A 334-amino-acid polypeptide reads, in one-letter code: Putative fatty acid elongase 1 (334 aa).

Topologically, residues 1–51 (MDLTGAHMLKIHRPSIDHPFGVDLWHLFEQLSIKTIGWNPSEFEYIPGKTP) are lumenal. A helical membrane pass occupies residues 52 to 72 (MSQWSSVIVSITAYYVIILSG). Residues 73–86 (RAIMTNRKPLKQRR) are Cytoplasmic-facing. The chain crosses the membrane as a helical span at residues 87 to 107 (LFQLHNFILTIISGALLALLV). Over 108-135 (EEVFRNYMRNGLFYCVCDSRHFTQRLVT) the chain is Lumenal. A helical membrane pass occupies residues 136–156 (LYYLNYLTKYLELMDTVFLFL). Residues 157-160 (KKKP) are Cytoplasmic-facing. Residues 161–181 (LAFLHCYHHGITALLCFTQLL) traverse the membrane as a helical segment. At 182–187 (GRTSVQ) the chain is on the lumenal side. The chain crosses the membrane as a helical span at residues 188–208 (WGVIGLNLYVHVIMYSYYFLA). The Cytoplasmic segment spans residues 209–224 (ACGRRVWWKQWVTRVQ). Residues 225–245 (IIQFVLDLILCYFGTYSHIAF) form a helical membrane-spanning segment. Residues 246 to 260 (RYFPWLPHVGDCSGS) lie on the Lumenal side of the membrane. Residues 261–281 (LFAAFFGCGVLSSYLFLFIGF) form a helical membrane-spanning segment. The Cytoplasmic portion of the chain corresponds to 282 to 334 (YINTYIKRGAKKNQRKAAGKADNTSVAAAAGSEALAATTATNASPFSARSRKL). Ser-325 carries the post-translational modification Phosphoserine.

Belongs to the ELO family.

Its subcellular location is the endoplasmic reticulum membrane. It carries out the reaction a very-long-chain acyl-CoA + malonyl-CoA + H(+) = a very-long-chain 3-oxoacyl-CoA + CO2 + CoA. May be involved in the synthesis of very long chain fatty acids. The polypeptide is Putative fatty acid elongase 1 (Schizosaccharomyces pombe (strain 972 / ATCC 24843) (Fission yeast)).